The following is a 178-amino-acid chain: MEQYHGTTILSVRRGNSVALGGDGQVTLGNIVVKASARKVRTLYQGQILAGFAGGTADAFTLFERFEAKLDKHQGNLLRSAVELAKDWRTDRMLRRLEAMLAVADREHSLIITGNGDVLEPEQGIVAIGSGGAYAQSAARALIENTELSPRDVIAKSLAIAGDLCIYTNQCHTIEVLD.

Threonine 7 is a catalytic residue. 3 residues coordinate Na(+): glycine 162, cysteine 165, and threonine 168.

It belongs to the peptidase T1B family. HslV subfamily. As to quaternary structure, a double ring-shaped homohexamer of HslV is capped on each side by a ring-shaped HslU homohexamer. The assembly of the HslU/HslV complex is dependent on binding of ATP.

It is found in the cytoplasm. It catalyses the reaction ATP-dependent cleavage of peptide bonds with broad specificity.. Its activity is regulated as follows. Allosterically activated by HslU binding. In terms of biological role, protease subunit of a proteasome-like degradation complex believed to be a general protein degrading machinery. This is ATP-dependent protease subunit HslV from Azoarcus sp. (strain BH72).